Here is a 236-residue protein sequence, read N- to C-terminus: Small ribosomal subunit protein uS3 (236 aa).

The 69-residue stretch at 39–107 (IREVLEKQLK…EVHLNIVEVR (69 aa)) folds into the KH type-2 domain. Residues 214-236 (ASERRALEGGDSGGGRSRRDDRG) form a disordered region.

The protein belongs to the universal ribosomal protein uS3 family. In terms of assembly, part of the 30S ribosomal subunit. Forms a tight complex with proteins S10 and S14.

In terms of biological role, binds the lower part of the 30S subunit head. Binds mRNA in the 70S ribosome, positioning it for translation. The polypeptide is Small ribosomal subunit protein uS3 (Parvibaculum lavamentivorans (strain DS-1 / DSM 13023 / NCIMB 13966)).